The sequence spans 153 residues: Endoribonuclease YbeY (153 aa).

Positions 118, 122, and 128 each coordinate Zn(2+).

It belongs to the endoribonuclease YbeY family. Zn(2+) is required as a cofactor.

It localises to the cytoplasm. Its function is as follows. Single strand-specific metallo-endoribonuclease involved in late-stage 70S ribosome quality control and in maturation of the 3' terminus of the 16S rRNA. The polypeptide is Endoribonuclease YbeY (Chloroflexus aggregans (strain MD-66 / DSM 9485)).